The following is a 214-amino-acid chain: Pyrrolidone-carboxylate peptidase (214 aa).

Active-site residues include Glu80, Cys143, and His166.

Belongs to the peptidase C15 family. In terms of assembly, homotetramer.

Its subcellular location is the cytoplasm. It carries out the reaction Release of an N-terminal pyroglutamyl group from a polypeptide, the second amino acid generally not being Pro.. Functionally, removes 5-oxoproline from various penultimate amino acid residues except L-proline. The chain is Pyrrolidone-carboxylate peptidase from Enterobacter sp. (strain 638).